A 273-amino-acid polypeptide reads, in one-letter code: 2,3,4,5-tetrahydropyridine-2,6-dicarboxylate N-succinyltransferase (273 aa).

The substrate site is built by R104 and D141.

It belongs to the transferase hexapeptide repeat family. As to quaternary structure, homotrimer.

Its subcellular location is the cytoplasm. The enzyme catalyses (S)-2,3,4,5-tetrahydrodipicolinate + succinyl-CoA + H2O = (S)-2-succinylamino-6-oxoheptanedioate + CoA. Its pathway is amino-acid biosynthesis; L-lysine biosynthesis via DAP pathway; LL-2,6-diaminopimelate from (S)-tetrahydrodipicolinate (succinylase route): step 1/3. The protein is 2,3,4,5-tetrahydropyridine-2,6-dicarboxylate N-succinyltransferase of Thioalkalivibrio sulfidiphilus (strain HL-EbGR7).